The chain runs to 1132 residues: Rho GTPase-activating protein gacE (1132 aa).

The Rho-GAP domain occupies 76-262; that stretch reads LEMNKILKSE…FLISNYLNVF (187 aa). Disordered stretches follow at residues 279 to 354 and 472 to 517; these read NELL…SSPI and NSTT…SLIN. Positions 281 to 301 are enriched in low complexity; sequence LLNNNNNNNNVIMPTTTTTTT. Residues 302–311 show a composition bias toward polar residues; it reads SASSSILPTD. Composition is skewed to low complexity over residues 328 to 354, 473 to 498, and 507 to 517; these read SIPL…SSPI, STTT…STTT, and SNSASNNSLIN.

The protein localises to the cytoplasm. In terms of biological role, rho GTPase-activating protein involved in the signal transduction pathway. This Dictyostelium discoideum (Social amoeba) protein is Rho GTPase-activating protein gacE (gacE).